Reading from the N-terminus, the 65-residue chain is MELRAKALREMSDEELNEKLSSLKESLLRERSSVAMGGAPSSPGKMRSIRRQIARVLTVMEEKKR.

Residues 30–49 (ERSSVAMGGAPSSPGKMRSI) form a disordered region.

This sequence belongs to the universal ribosomal protein uL29 family.

The polypeptide is Large ribosomal subunit protein uL29 (Picrophilus torridus (strain ATCC 700027 / DSM 9790 / JCM 10055 / NBRC 100828 / KAW 2/3)).